The primary structure comprises 406 residues: Probable sphingosine-1-phosphate phosphatase (406 aa).

2 helical membrane-spanning segments follow: residues 66-86 (ILGE…CVAT) and 92-112 (LCVV…TFTL). Residues 107–115 (KNTFTLPRP) form a phosphatase sequence motif I region. A phosphatase sequence motif II region spans residues 133–136 (PSTH). Histidine 136 acts as the Proton donor in catalysis. The next 2 helical transmembrane spans lie at 138–158 (ASAF…FPTI) and 162–182 (FNIS…SVMF). Residues 183 to 194 (SRLYNGHHTPMD) form a phosphatase sequence motif III region. The active-site Nucleophile is histidine 190. The next 5 membrane-spanning stretches (helical) occupy residues 193-213 (MDVI…TYQL), 225-245 (TFLF…FFHP), 254-274 (AYPE…SLWL), 313-333 (ILIG…FFFF), and 374-394 (LFVY…FYYL).

The protein belongs to the type 2 lipid phosphate phosphatase family.

It localises to the endoplasmic reticulum membrane. In terms of biological role, has enzymatic activity against both sphingosine 1 phosphate (S1P) and dihydro-S1P. Regulates intracellular and extracellular S1P levels. The chain is Probable sphingosine-1-phosphate phosphatase (sppA) from Dictyostelium discoideum (Social amoeba).